The primary structure comprises 273 residues: Eukaryotic translation initiation factor 3 subunit G-2 (273 aa).

Positions 193–271 constitute an RRM domain; it reads SAVRISNLSE…LILCVEWSKP (79 aa).

The protein belongs to the eIF-3 subunit G family. In terms of assembly, component of the eukaryotic translation initiation factor 3 (eIF-3) complex. The eIF-3 complex interacts with pix.

It localises to the cytoplasm. RNA-binding component of the eukaryotic translation initiation factor 3 (eIF-3) complex, which is involved in protein synthesis of a specialized repertoire of mRNAs and, together with other initiation factors, stimulates binding of mRNA and methionyl-tRNAi to the 40S ribosome. The eIF-3 complex specifically targets and initiates translation of a subset of mRNAs involved in cell proliferation. This subunit can bind 18S rRNA. The polypeptide is Eukaryotic translation initiation factor 3 subunit G-2 (Drosophila simulans (Fruit fly)).